We begin with the raw amino-acid sequence, 115 residues long: NADH-ubiquinone oxidoreductase chain 3 (115 aa).

3 helical membrane passes run 3–23, 55–75, and 86–106; these read LMITLLTNTMLTSLMVLIAFW, FFLVAITFLLFDLEIALLLPL, and LTLLMSFMLIILLAIGLAYEW.

This sequence belongs to the complex I subunit 3 family. As to quaternary structure, core subunit of respiratory chain NADH dehydrogenase (Complex I) which is composed of 45 different subunits. Interacts with TMEM186. Interacts with TMEM242.

The protein localises to the mitochondrion inner membrane. The catalysed reaction is a ubiquinone + NADH + 5 H(+)(in) = a ubiquinol + NAD(+) + 4 H(+)(out). Functionally, core subunit of the mitochondrial membrane respiratory chain NADH dehydrogenase (Complex I) which catalyzes electron transfer from NADH through the respiratory chain, using ubiquinone as an electron acceptor. Essential for the catalytic activity of complex I. This Loxodonta africana (African elephant) protein is NADH-ubiquinone oxidoreductase chain 3.